Consider the following 240-residue polypeptide: Flavin-dependent thymidylate synthase (240 aa).

Residues 13–235 (ITVELVKHSA…PETHAAFEKQ (223 aa)) enclose the ThyX domain. Residues serine 64, 87–89 (RHR), and glutamate 95 contribute to the FAD site. DUMP contacts are provided by residues 84 to 87 (EFMR), 95 to 99 (EESGR), and arginine 167. The ThyX motif motif lies at 87-97 (RHRIASYNEES). Residues 183–185 (NAR) and asparagine 189 contribute to the FAD site. A dUMP-binding site is contributed by arginine 194. Arginine 194 (involved in ionization of N3 of dUMP, leading to its activation) is an active-site residue.

Belongs to the thymidylate synthase ThyX family. Homotetramer. The cofactor is FAD.

It catalyses the reaction dUMP + (6R)-5,10-methylene-5,6,7,8-tetrahydrofolate + NADPH + H(+) = dTMP + (6S)-5,6,7,8-tetrahydrofolate + NADP(+). Its pathway is pyrimidine metabolism; dTTP biosynthesis. In terms of biological role, catalyzes the reductive methylation of 2'-deoxyuridine-5'-monophosphate (dUMP) to 2'-deoxythymidine-5'-monophosphate (dTMP) while utilizing 5,10-methylenetetrahydrofolate (mTHF) as the methyl donor, and NADPH and FADH(2) as the reductant. This Tropheryma whipplei (strain TW08/27) (Whipple's bacillus) protein is Flavin-dependent thymidylate synthase.